An 89-amino-acid polypeptide reads, in one-letter code: Small ribosomal subunit protein bS20 (89 aa).

This sequence belongs to the bacterial ribosomal protein bS20 family.

Binds directly to 16S ribosomal RNA. In Stenotrophomonas maltophilia (strain K279a), this protein is Small ribosomal subunit protein bS20.